The following is a 195-amino-acid chain: Glycerol-3-phosphate acyltransferase (195 aa).

The next 6 membrane-spanning stretches (helical) occupy residues 4-24 (GLIL…GLLL), 53-73 (GLAA…VLIA), 80-100 (TAVW…WLGF), 110-130 (LGVL…IWLA), 133-153 (FLFR…PIAL), and 154-174 (YFLS…IVFI).

This sequence belongs to the PlsY family. In terms of assembly, probably interacts with PlsX.

The protein resides in the cell inner membrane. The catalysed reaction is an acyl phosphate + sn-glycerol 3-phosphate = a 1-acyl-sn-glycero-3-phosphate + phosphate. It functions in the pathway lipid metabolism; phospholipid metabolism. Functionally, catalyzes the transfer of an acyl group from acyl-phosphate (acyl-PO(4)) to glycerol-3-phosphate (G3P) to form lysophosphatidic acid (LPA). This enzyme utilizes acyl-phosphate as fatty acyl donor, but not acyl-CoA or acyl-ACP. This Mesorhizobium japonicum (strain LMG 29417 / CECT 9101 / MAFF 303099) (Mesorhizobium loti (strain MAFF 303099)) protein is Glycerol-3-phosphate acyltransferase.